The chain runs to 621 residues: Phosphoenolpyruvate carboxykinase [GTP] (621 aa).

Residues arginine 82 and 220–222 (YGG) contribute to the substrate site. Residues lysine 229 and histidine 249 each contribute to the Mn(2+) site. Serine 271 provides a ligand contact to substrate. 272–277 (QCGKTN) contacts GTP. The active site involves cysteine 273. Aspartate 296 contacts Mn(2+). 386-388 (NSR) serves as a coordination point for substrate. GTP-binding positions include arginine 388, arginine 419, and 514–517 (FGEN).

It belongs to the phosphoenolpyruvate carboxykinase [GTP] family. Monomer. The cofactor is Mn(2+).

Its subcellular location is the cytoplasm. The enzyme catalyses oxaloacetate + GTP = phosphoenolpyruvate + GDP + CO2. It participates in carbohydrate biosynthesis; gluconeogenesis. Its function is as follows. Catalyzes the conversion of oxaloacetate (OAA) to phosphoenolpyruvate (PEP), the rate-limiting step in the metabolic pathway that produces glucose from lactate and other precursors derived from the citric acid cycle. This chain is Phosphoenolpyruvate carboxykinase [GTP], found in Corynebacterium kroppenstedtii (strain DSM 44385 / JCM 11950 / CIP 105744 / CCUG 35717).